A 168-amino-acid chain; its full sequence is Peptide deformylase 2 (168 aa).

Fe cation is bound by residues cysteine 91 and histidine 133. Glutamate 134 is a catalytic residue. Fe cation is bound at residue histidine 137.

The protein belongs to the polypeptide deformylase family. It depends on Fe(2+) as a cofactor.

It catalyses the reaction N-terminal N-formyl-L-methionyl-[peptide] + H2O = N-terminal L-methionyl-[peptide] + formate. Functionally, removes the formyl group from the N-terminal Met of newly synthesized proteins. Requires at least a dipeptide for an efficient rate of reaction. N-terminal L-methionine is a prerequisite for activity but the enzyme has broad specificity at other positions. This Vibrio vulnificus (strain CMCP6) protein is Peptide deformylase 2.